The following is a 1287-amino-acid chain: DNA-directed RNA polymerase 147 kDa polypeptide (1287 aa).

This sequence belongs to the poxviridae DNA-directed RNA polymerase 147 kDa subunit family. In terms of assembly, the DNA-dependent RNA polymerase used for intermediate and late genes expression consists of eight subunits Rpo30/OPG66, Rpo7/OPG90, Rpo22/OPG103, Rpo147/OPG105, Rpo18/OPG119, Rpo19/OPG131, Rpo132/OPG151 and Rpo35/OPG156. The same holoenzyme, with the addition of the transcription-specificity factor OPG109, is used for early gene expression.

The protein resides in the virion. It carries out the reaction RNA(n) + a ribonucleoside 5'-triphosphate = RNA(n+1) + diphosphate. Functionally, part of the DNA-dependent RNA polymerase which catalyzes the transcription of viral DNA into RNA using the four ribonucleoside triphosphates as substrates. Responsible for the transcription of early, intermediate and late genes. DNA-dependent RNA polymerase associates with the early transcription factor (ETF), itself composed of OPG118 and OPG133, thereby allowing the early genes transcription. Late transcription, and probably also intermediate transcription, require newly synthesized RNA polymerase. The protein is DNA-directed RNA polymerase 147 kDa polypeptide (OPG105) of Fowlpox virus (strain NVSL) (FPV).